The following is a 735-amino-acid chain: Muskelin (735 aa).

Alanine 2 is modified (N-acetylalanine). Residues 172–204 (REQEAIRLCLKHFRQHNYTEAFESLQKKTKIAL) enclose the LisH domain. Residues 206–258 (HPMLTDIHDKLVLKGDFDACEELIEKAVNDGLFNQYISQQEYKPRWSQIIPKS) form the CTLH domain. Kelch repeat units follow at residues 284–330 (TVYL…SCHK), 339–391 (QIYT…FDHQ), 408–458 (ILTC…SRIG), 469–515 (CLYV…TGFT), 526–578 (EIHV…SLQE), and 597–651 (VHYL…AQVD).

Homodimer; may form higher oligomers. Identified in the CTLH complex that contains GID4, RANBP9 and/or RANBP10, MKLN1, MAEA, RMND5A (or alternatively its paralog RMND5B), GID8, ARMC8, WDR26 and YPEL5. Within this complex, MAEA, RMND5A (or alternatively its paralog RMND5B), GID8, WDR26, and RANBP9 and/or RANBP10 form the catalytic core, while GID4, MKLN1, ARMC8 and YPEL5 have ancillary roles. Interacts with RANBP9. Part of a complex consisting of RANBP9, MKLN1 and GID8. Interacts with GABRA1. Interacts with the C-terminal tail of PTGER3.

It is found in the cytoplasm. The protein resides in the cytosol. Its subcellular location is the nucleus. The protein localises to the nucleoplasm. It localises to the cell projection. It is found in the ruffle. The protein resides in the cell cortex. Its subcellular location is the synapse. The protein localises to the postsynapse. Functionally, component of the CTLH E3 ubiquitin-protein ligase complex that selectively accepts ubiquitin from UBE2H and mediates ubiquitination and subsequent proteasomal degradation of the transcription factor HBP1. Required for internalization of the GABA receptor GABRA1 from the cell membrane via endosomes and subsequent GABRA1 degradation. Acts as a mediator of cell spreading and cytoskeletal responses to the extracellular matrix component THBS1. In Homo sapiens (Human), this protein is Muskelin (MKLN1).